Consider the following 156-residue polypeptide: Small ribosomal subunit protein uS7 (156 aa).

It belongs to the universal ribosomal protein uS7 family. Part of the 30S ribosomal subunit. Contacts proteins S9 and S11.

In terms of biological role, one of the primary rRNA binding proteins, it binds directly to 16S rRNA where it nucleates assembly of the head domain of the 30S subunit. Is located at the subunit interface close to the decoding center, probably blocks exit of the E-site tRNA. In Bartonella henselae (strain ATCC 49882 / DSM 28221 / CCUG 30454 / Houston 1) (Rochalimaea henselae), this protein is Small ribosomal subunit protein uS7.